The following is a 61-amino-acid chain: MAEQKKIRVTLVKSLIGTIESHRACARGLGLRRREHTVEVLDTSENRGMINKISYLLKVES.

This sequence belongs to the universal ribosomal protein uL30 family. As to quaternary structure, part of the 50S ribosomal subunit.

In Neisseria gonorrhoeae (strain ATCC 700825 / FA 1090), this protein is Large ribosomal subunit protein uL30.